A 176-amino-acid polypeptide reads, in one-letter code: Protein GrpE (176 aa).

This sequence belongs to the GrpE family. As to quaternary structure, homodimer.

The protein resides in the cytoplasm. Participates actively in the response to hyperosmotic and heat shock by preventing the aggregation of stress-denatured proteins, in association with DnaK and GrpE. It is the nucleotide exchange factor for DnaK and may function as a thermosensor. Unfolded proteins bind initially to DnaJ; upon interaction with the DnaJ-bound protein, DnaK hydrolyzes its bound ATP, resulting in the formation of a stable complex. GrpE releases ADP from DnaK; ATP binding to DnaK triggers the release of the substrate protein, thus completing the reaction cycle. Several rounds of ATP-dependent interactions between DnaJ, DnaK and GrpE are required for fully efficient folding. This is Protein GrpE from Thermoplasma volcanium (strain ATCC 51530 / DSM 4299 / JCM 9571 / NBRC 15438 / GSS1).